The chain runs to 212 residues: Phosphatidylserine decarboxylase proenzyme (212 aa).

Ser182 functions as the Schiff-base intermediate with substrate; via pyruvic acid in the catalytic mechanism. Ser182 carries the post-translational modification Pyruvic acid (Ser); by autocatalysis.

It belongs to the phosphatidylserine decarboxylase family. PSD-A subfamily. In terms of assembly, heterodimer of a large membrane-associated beta subunit and a small pyruvoyl-containing alpha subunit. Requires pyruvate as cofactor. Post-translationally, is synthesized initially as an inactive proenzyme. Formation of the active enzyme involves a self-maturation process in which the active site pyruvoyl group is generated from an internal serine residue via an autocatalytic post-translational modification. Two non-identical subunits are generated from the proenzyme in this reaction, and the pyruvate is formed at the N-terminus of the alpha chain, which is derived from the carboxyl end of the proenzyme. The post-translation cleavage follows an unusual pathway, termed non-hydrolytic serinolysis, in which the side chain hydroxyl group of the serine supplies its oxygen atom to form the C-terminus of the beta chain, while the remainder of the serine residue undergoes an oxidative deamination to produce ammonia and the pyruvoyl prosthetic group on the alpha chain.

Its subcellular location is the cell membrane. The catalysed reaction is a 1,2-diacyl-sn-glycero-3-phospho-L-serine + H(+) = a 1,2-diacyl-sn-glycero-3-phosphoethanolamine + CO2. It participates in phospholipid metabolism; phosphatidylethanolamine biosynthesis; phosphatidylethanolamine from CDP-diacylglycerol: step 2/2. Its function is as follows. Catalyzes the formation of phosphatidylethanolamine (PtdEtn) from phosphatidylserine (PtdSer). In Chlorobium chlorochromatii (strain CaD3), this protein is Phosphatidylserine decarboxylase proenzyme.